The chain runs to 281 residues: Probable endonuclease 4 (281 aa).

Residues His69, His109, Glu145, Asp179, His182, His216, Asp229, His231, and Glu261 each contribute to the Zn(2+) site.

Belongs to the AP endonuclease 2 family. The cofactor is Zn(2+).

The enzyme catalyses Endonucleolytic cleavage to 5'-phosphooligonucleotide end-products.. Endonuclease IV plays a role in DNA repair. It cleaves phosphodiester bonds at apurinic or apyrimidinic (AP) sites, generating a 3'-hydroxyl group and a 5'-terminal sugar phosphate. This is Probable endonuclease 4 from Pectobacterium carotovorum subsp. carotovorum (strain PC1).